Here is a 115-residue protein sequence, read N- to C-terminus: Meiotically up-regulated gene 42 protein (115 aa).

Functionally, has a role in meiosis. This chain is Meiotically up-regulated gene 42 protein (mug42), found in Schizosaccharomyces pombe (strain 972 / ATCC 24843) (Fission yeast).